Consider the following 121-residue polypeptide: Ribosome-binding factor A (121 aa).

It belongs to the RbfA family. As to quaternary structure, monomer. Binds 30S ribosomal subunits, but not 50S ribosomal subunits or 70S ribosomes.

The protein localises to the cytoplasm. One of several proteins that assist in the late maturation steps of the functional core of the 30S ribosomal subunit. Associates with free 30S ribosomal subunits (but not with 30S subunits that are part of 70S ribosomes or polysomes). Required for efficient processing of 16S rRNA. May interact with the 5'-terminal helix region of 16S rRNA. This is Ribosome-binding factor A from Clostridium kluyveri (strain NBRC 12016).